The chain runs to 193 residues: Ribosomal RNA small subunit methyltransferase G (193 aa).

Residues G72, F77, 123–124, and R137 each bind S-adenosyl-L-methionine; that span reads IE.

The protein belongs to the methyltransferase superfamily. RNA methyltransferase RsmG family.

The protein localises to the cytoplasm. The enzyme catalyses guanosine(527) in 16S rRNA + S-adenosyl-L-methionine = N(7)-methylguanosine(527) in 16S rRNA + S-adenosyl-L-homocysteine. Functionally, specifically methylates the N7 position of guanine in position 527 of 16S rRNA. The polypeptide is Ribosomal RNA small subunit methyltransferase G (Wolinella succinogenes (strain ATCC 29543 / DSM 1740 / CCUG 13145 / JCM 31913 / LMG 7466 / NCTC 11488 / FDC 602W) (Vibrio succinogenes)).